The sequence spans 550 residues: Membrane protein insertase YidC (550 aa).

The helical transmembrane segment at 6-26 (LIVFIVLSFGLLFVWQEYFAP) threads the bilayer. The segment at 30–59 (PKPVAAAVQPDGTPAPATARPADSPATGKL) is disordered. The next 4 membrane-spanning stretches (helical) occupy residues 360 to 380 (WGWA…PLSA), 430 to 450 (LPIV…LASV), 472 to 492 (ILPA…PPPA), and 504 to 524 (PLAF…YWLV).

This sequence belongs to the OXA1/ALB3/YidC family. Type 1 subfamily. In terms of assembly, interacts with the Sec translocase complex via SecD. Specifically interacts with transmembrane segments of nascent integral membrane proteins during membrane integration.

The protein localises to the cell inner membrane. Its function is as follows. Required for the insertion and/or proper folding and/or complex formation of integral membrane proteins into the membrane. Involved in integration of membrane proteins that insert both dependently and independently of the Sec translocase complex, as well as at least some lipoproteins. Aids folding of multispanning membrane proteins. This Laribacter hongkongensis (strain HLHK9) protein is Membrane protein insertase YidC.